The primary structure comprises 786 residues: AT-rich interactive domain-containing protein 3 (786 aa).

Low complexity predominate over residues 1-16 (MENLTEIESTMESLTE). Disordered stretches follow at residues 1-182 (MENL…HHAD), 199-251 (SGDH…IPAN), and 395-420 (DTTV…NSSA). 2 stretches are compositionally biased toward basic and acidic residues: residues 18–64 (ESER…HEDS) and 87–97 (DLPKIDDEKNS). Residues 130-139 (ENIVSSEVSS) show a composition bias toward low complexity. Basic and acidic residues-rich tracts occupy residues 141–156 (ILKD…RDTA), 169–182 (KLSE…HHAD), 199–219 (SGDH…ENQS), 234–248 (AEER…HKEI), and 402–416 (NNKD…ERQD). The 92-residue stretch at 494–585 (EEDQSAFMKE…ALLEYERHKV (92 aa)) folds into the ARID domain. A disordered region spans residues 606-638 (QASGSGRARRDAASRAMQGWHSQRLNGNGEVSD). The region spanning 686 to 786 (VTVVDVGPPA…FVRVPLEQLE (101 aa)) is the sHSP domain.

The protein belongs to the small heat shock protein (HSP20) family.

It is found in the nucleus. In Arabidopsis thaliana (Mouse-ear cress), this protein is AT-rich interactive domain-containing protein 3 (ARID3).